A 477-amino-acid chain; its full sequence is Otoconin-90 (477 aa).

The signal sequence occupies residues 1 to 17; the sequence is MIAFLLTSVLMIPHAGG. A glycan (N-linked (GlcNAc...) asparagine) is linked at asparagine 38. 3 phospholipase A2-like regions span residues 76–190, 305–361, and 373–425; these read LIQF…TSFC, MPQL…RLGC, and CVDH…PAAC. Cystine bridges form between cysteine 85–cysteine 145, cysteine 99–cysteine 190, cysteine 101–cysteine 117, cysteine 116–cysteine 172, cysteine 123–cysteine 165, cysteine 132–cysteine 158, and cysteine 152–cysteine 163. Asparagine 179 carries an N-linked (GlcNAc...) asparagine glycan. N-linked (GlcNAc...) asparagine glycosylation occurs at asparagine 407. The tract at residues 428 to 477 is disordered; that stretch reads SLHPVPAAPTLGSSSEEDSEEDPPQEDLGRAKRFLRKSLGPLGIGPLHGR. Positions 442–452 are enriched in acidic residues; it reads SEEDSEEDPPQ.

Belongs to the phospholipase A2 family. In terms of assembly, interacts with OTOL1.

Its subcellular location is the secreted. In terms of biological role, major protein of the otoconia, a calcium carbonate structure in the saccule and utricle of the ear. Together with OTOL1, acts as a scaffold for otoconia biomineralization: sequesters calcium and forms interconnecting fibrils between otoconia that are incorporated into the calcium crystal structure. Together with OTOL1, modulates calcite crystal morphology and growth kinetics. It is unlikely that this protein has phospholipase A2 activity. The chain is Otoconin-90 from Homo sapiens (Human).